The chain runs to 1290 residues: Period circadian protein homolog 1 (1290 aa).

The segment at 1 to 134 (MSGPLEGADG…SSEQSARART (134 aa)) is disordered. Residues 1-151 (MSGPLEGADG…LRELKLRLPP (151 aa)) form an interaction with BTRC region. The segment covering 25–38 (VPSPGPPQHRPCPG) has biased composition (pro residues). Low complexity-rich tracts occupy residues 48 to 57 (NSNGSSGNES) and 64 to 115 (GASQ…ASSE). Polar residues predominate over residues 116 to 132 (QDNPSTSGCSSEQSARA). At Thr-121 the chain carries Phosphothreonine; by CSNK1E. Ser-122 and Ser-126 each carry phosphoserine; by CSNK1E. The Nuclear export signal 1 motif lies at 138–147 (LMTALRELKL). PAS domains are found at residues 208–275 (ITSE…PSRL) and 348–414 (YEAP…KILQ). Residues 422–465 (HSPIRFCARNGEYVTMDTSWAGFVHPWSRKVAFVLGRHKVRTAP) enclose the PAC domain. The Nuclear export signal 2 signature appears at 489 to 498 (LSEQIHRLLL). Disordered stretches follow at residues 508–544 (GLCGVGAVTSPGPLHSPGSSSDSNGGDAEGPGPPAPV) and 646–698 (TTKR…KEPV). Low complexity-rich tracts occupy residues 517 to 533 (SPGPLHSPGSSSDSNGG) and 652 to 662 (ASSSSYTTSSA). The required for phosphorylation by CSNK1E stretch occupies residues 596 to 815 (ELEAGSAPVQ…GLDSSSTAPS (220 aa)). Phosphoserine is present on residues Ser-661, Ser-663, and Ser-704. Disordered stretches follow at residues 749 to 772 (GLAPGPAPSPAPSPTVAPDPAPDA), 805 to 874 (RGLD…PPAT), and 938 to 977 (ALQTPAEGPPTPASHSPSPSLPALAPSPPHRPDSPLFNSR). Positions 751 to 769 (APGPAPSPAPSPTVAPDPA) are enriched in pro residues. The residue at position 815 (Ser-815) is a Phosphoserine. A Nuclear localization signal motif is present at residues 827–843 (APPSRRHHCRSKAKRSR). A compositionally biased stretch (basic residues) spans 830–847 (SRRHHCRSKAKRSRHHQN). Residues 860 to 874 (SPVPPSTPWPTPPAT) show a composition bias toward pro residues. The segment covering 950-961 (ASHSPSPSLPAL) has biased composition (low complexity). Phosphoserine occurs at positions 979 and 980. The Nuclear export signal 3 signature appears at 982-989 (LQLNLLQL). Residues 996-1037 (EGAAVAGGPGSSAGPPPPSAEAAEPEARLAEVTESSNQDALS) form a disordered region. Positions 1043–1047 (LELLL) match the LXXLL motif. Low complexity predominate over residues 1051 to 1062 (SRSGTGSAASGS). Disordered regions lie at residues 1051–1098 (SRSG…SKYF) and 1207–1290 (SSTQ…NCTS). The segment covering 1063–1077 (LGSGLGSGSGSGSHE) has biased composition (gly residues). The segment covering 1078 to 1095 (GGSTSASITRSSQSSHTS) has biased composition (low complexity). Residues 1149 to 1290 (SRDMTSVLKQ…ALPTAGNCTS (142 aa)) are CRY binding domain. The span at 1236-1248 (GEQGSSGGGSGEG) shows a compositional bias: gly residues.

As to quaternary structure, homodimer. Component of the circadian core oscillator, which includes the CRY proteins, CLOCK or NPAS2, BMAL1 or BMAL2, CSNK1D and/or CSNK1E, TIMELESS, and the PER proteins. Interacts directly with TIMELESS, PER2, PER3, CRY1 and CRY2. Interacts with BMAL1 and CLOCK. Interacts with GPRASP1. Interacts (phosphorylated) with BTRC and FBXW11; the interactions trigger proteasomal degradation. Interacts with NONO, WDR5 and SFPQ. Interacts with USP2. Interacts with HNF4A. Phosphorylated on serine residues by CSNK1D, CSNK1E and probably also by CSNK1G2. Phosphorylation by CSNK1D or CSNK1E promotes nuclear location of PER proteins as well as ubiquitination and subsequent degradation. May be dephosphorylated by PP1. In terms of processing, ubiquitinated; requires phosphorylation by CSNK1E and interaction with BTRC and FBXW11. Deubiquitinated by USP2. In terms of tissue distribution, widely expressed. Expressed in hair follicles (at protein level). Found in heart, brain, placenta, lung, liver, skeletal muscle, pancreas, kidney, spleen, thymus, prostate, testis, ovary and small intestine. Highest level in skeletal muscle.

It localises to the nucleus. It is found in the cytoplasm. In terms of biological role, transcriptional repressor which forms a core component of the circadian clock. The circadian clock, an internal time-keeping system, regulates various physiological processes through the generation of approximately 24 hour circadian rhythms in gene expression, which are translated into rhythms in metabolism and behavior. It is derived from the Latin roots 'circa' (about) and 'diem' (day) and acts as an important regulator of a wide array of physiological functions including metabolism, sleep, body temperature, blood pressure, endocrine, immune, cardiovascular, and renal function. Consists of two major components: the central clock, residing in the suprachiasmatic nucleus (SCN) of the brain, and the peripheral clocks that are present in nearly every tissue and organ system. Both the central and peripheral clocks can be reset by environmental cues, also known as Zeitgebers (German for 'timegivers'). The predominant Zeitgeber for the central clock is light, which is sensed by retina and signals directly to the SCN. The central clock entrains the peripheral clocks through neuronal and hormonal signals, body temperature and feeding-related cues, aligning all clocks with the external light/dark cycle. Circadian rhythms allow an organism to achieve temporal homeostasis with its environment at the molecular level by regulating gene expression to create a peak of protein expression once every 24 hours to control when a particular physiological process is most active with respect to the solar day. Transcription and translation of core clock components (CLOCK, NPAS2, BMAL1, BMAL2, PER1, PER2, PER3, CRY1 and CRY2) plays a critical role in rhythm generation, whereas delays imposed by post-translational modifications (PTMs) are important for determining the period (tau) of the rhythms (tau refers to the period of a rhythm and is the length, in time, of one complete cycle). A diurnal rhythm is synchronized with the day/night cycle, while the ultradian and infradian rhythms have a period shorter and longer than 24 hours, respectively. Disruptions in the circadian rhythms contribute to the pathology of cardiovascular diseases, cancer, metabolic syndromes and aging. A transcription/translation feedback loop (TTFL) forms the core of the molecular circadian clock mechanism. Transcription factors, CLOCK or NPAS2 and BMAL1 or BMAL2, form the positive limb of the feedback loop, act in the form of a heterodimer and activate the transcription of core clock genes and clock-controlled genes (involved in key metabolic processes), harboring E-box elements (5'-CACGTG-3') within their promoters. The core clock genes: PER1/2/3 and CRY1/2 which are transcriptional repressors form the negative limb of the feedback loop and interact with the CLOCK|NPAS2-BMAL1|BMAL2 heterodimer inhibiting its activity and thereby negatively regulating their own expression. This heterodimer also activates nuclear receptors NR1D1/2 and RORA/B/G, which form a second feedback loop and which activate and repress BMAL1 transcription, respectively. Regulates circadian target genes expression at post-transcriptional levels, but may not be required for the repression at transcriptional level. Controls PER2 protein decay. Represses CRY2 preventing its repression on CLOCK/BMAL1 target genes such as FXYD5 and SCNN1A in kidney and PPARA in liver. Besides its involvement in the maintenance of the circadian clock, has an important function in the regulation of several processes. Participates in the repression of glucocorticoid receptor NR3C1/GR-induced transcriptional activity by reducing the association of NR3C1/GR to glucocorticoid response elements (GREs) by BMAL1:CLOCK. Plays a role in the modulation of the neuroinflammatory state via the regulation of inflammatory mediators release, such as CCL2 and IL6. In spinal astrocytes, negatively regulates the MAPK14/p38 and MAPK8/JNK MAPK cascades as well as the subsequent activation of NFkappaB. Coordinately regulates the expression of multiple genes that are involved in the regulation of renal sodium reabsorption. Can act as gene expression activator in a gene and tissue specific manner, in kidney enhances WNK1 and SLC12A3 expression in collaboration with CLOCK. Modulates hair follicle cycling. Represses the CLOCK-BMAL1 induced transcription of BHLHE40/DEC1. The chain is Period circadian protein homolog 1 (PER1) from Homo sapiens (Human).